Here is a 321-residue protein sequence, read N- to C-terminus: Pectinesterase (321 aa).

Position 1 is an N-acetylthreonine (Thr-1). The N-linked (GlcNAc...) (complex) asparagine glycan is linked to Asn-75. Positions 84 and 114 each coordinate substrate. The Proton donor role is filled by Asp-137. Cys-151 and Cys-171 are joined by a disulfide. Asp-158 functions as the Nucleophile in the catalytic mechanism. Residues Arg-226 and Trp-228 each coordinate substrate. N-linked (GlcNAc...) (complex) asparagine glycosylation is found at Asn-275, Asn-290, and Asn-319.

It belongs to the pectinesterase family. In terms of processing, the N-glycans attached at Asn-75, Asn-275, Asn-290 and Asn-319 are complex oligosaccharides containing xylose, fucose, hexose and N-acetylglucosamine.

It catalyses the reaction [(1-&gt;4)-alpha-D-galacturonosyl methyl ester](n) + n H2O = [(1-&gt;4)-alpha-D-galacturonosyl](n) + n methanol + n H(+). Its pathway is glycan metabolism; pectin degradation; 2-dehydro-3-deoxy-D-gluconate from pectin: step 1/5. Its activity is regulated as follows. Inhibited by PMEI. This chain is Pectinesterase, found in Actinidia deliciosa (Kiwi).